The following is a 293-amino-acid chain: Homoserine kinase (293 aa).

80-90 serves as a coordination point for ATP; sequence RPASGLGSSAA.

It belongs to the GHMP kinase family. Homoserine kinase subfamily.

The protein localises to the cytoplasm. The catalysed reaction is L-homoserine + ATP = O-phospho-L-homoserine + ADP + H(+). The protein operates within amino-acid biosynthesis; L-threonine biosynthesis; L-threonine from L-aspartate: step 4/5. Catalyzes the ATP-dependent phosphorylation of L-homoserine to L-homoserine phosphate. In Halorubrum lacusprofundi (strain ATCC 49239 / DSM 5036 / JCM 8891 / ACAM 34), this protein is Homoserine kinase.